Reading from the N-terminus, the 3412-residue chain is Genome polyprotein (3412 aa).

Over Met-1–Glu-104 the chain is Cytoplasmic. The tract at residues Pro-38–Leu-72 is hydrophobic; homodimerization of capsid protein C. Positions Ser-102 to Gly-121 are cleaved as a propeptide — ER anchor for the capsid protein C, removed in mature form by serine protease NS3. Residues Met-105–Val-125 traverse the membrane as a helical segment. Topologically, residues Arg-126–Arg-244 are extracellular. N-linked (GlcNAc...) asparagine; by host glycosylation is found at Asn-134 and Asn-150. Residues Trp-245–Asn-265 traverse the membrane as a helical segment. Over Asn-266–Arg-270 the chain is Cytoplasmic. A helical membrane pass occupies residues Val-271–Ser-285. Over Ala-286–Leu-730 the chain is Extracellular. Intrachain disulfides connect Cys-288–Cys-315, Cys-345–Cys-401, Cys-345–Cys-406, Cys-359–Cys-390, Cys-377–Cys-401, Cys-377–Cys-406, Cys-467–Cys-568, and Cys-585–Cys-615. Residues Asp-383–Gly-396 form a fusion peptide region. A helical transmembrane segment spans residues Phe-731–Ile-751. Residues Asn-752–Thr-757 are Extracellular-facing. A helical membrane pass occupies residues Met-758 to Ala-778. Residues Asp-779 to Glu-1132 lie on the Extracellular side of the membrane. 6 disulfide bridges follow: Cys-782/Cys-793, Cys-833/Cys-921, Cys-957/Cys-1002, Cys-1058/Cys-1107, Cys-1069/Cys-1091, and Cys-1090/Cys-1094. Residues Asn-908 and Asn-986 are each glycosylated (N-linked (GlcNAc...) asparagine; by host). Residues Val-1133–Arg-1153 traverse the membrane as a helical segment. Residues Arg-1154 to Ala-1201 are Cytoplasmic-facing. A helical membrane pass occupies residues Met-1202 to Leu-1222. The Lumenal segment spans residues Arg-1223 to Pro-1287. Residues Met-1288 to Val-1308 traverse the membrane as a helical segment. Over Leu-1309–Ser-1355 the chain is Cytoplasmic. A helical transmembrane segment spans residues Ile-1356–Phe-1376. At Gln-1377–Asp-1378 the chain is on the lumenal side. A helical membrane pass occupies residues Met-1379–Ala-1399. Topologically, residues Gly-1400–Leu-1456 are cytoplasmic. The segment at Leu-1407–Val-1446 is interacts with and activates NS3 protease. The helical intramembrane region spans Ala-1457–Leu-1477. The Cytoplasmic portion of the chain corresponds to His-1478–Ala-2157. The Peptidase S7 domain maps to Ser-1485–Leu-1665. Active-site charge relay system; for serine protease NS3 activity residues include His-1537, Asp-1561, and Ser-1622. The Helicase ATP-binding domain maps to Pro-1669 to Gln-1825. Positions Lys-1673–Met-1676 are important for RNA-binding. Residue Phe-1682 to Thr-1689 participates in ATP binding. The DEAH box signature appears at Asp-1773–His-1776. One can recognise a Helicase C-terminal domain in the interval Gly-1836–Tyr-1997. An N6-acetyllysine; by host modification is found at Lys-1877. The interval Ala-1942 to Ser-1963 is disordered. The helical transmembrane segment at Met-2158–Phe-2178 threads the bilayer. Residues Met-2179–Arg-2186 lie on the Lumenal side of the membrane. The helical intramembrane region spans Met-2187–Lys-2207. Over Pro-2208–Thr-2209 the chain is Lumenal. Residues His-2210 to Gly-2230 form a helical membrane-spanning segment. The Cytoplasmic portion of the chain corresponds to Gln-2231 to Ala-2241. Residues Tyr-2242–Leu-2262 traverse the membrane as a helical segment. Residues Glu-2263–Pro-2293 are Lumenal-facing. The helical intramembrane region spans Gly-2294–Trp-2314. The Lumenal portion of the chain corresponds to Ile-2315 to Ser-2360. The chain crosses the membrane as a helical span at residues Ile-2361–Ile-2380. Residues Leu-2381–Pro-2421 are Cytoplasmic-facing. Residues Ala-2422 to Ala-2442 traverse the membrane as a helical segment. Over Met-2443–Arg-2445 the chain is Lumenal. Residues Thr-2446 to Glu-2466 form a helical membrane-spanning segment. At Gly-2467–Leu-3411 the chain is on the cytoplasmic side. Positions Gly-2508–Ser-2772 constitute an mRNA cap 0-1 NS5-type MT domain. Ser-2563 is an S-adenosyl-L-methionine binding site. Ser-2563 carries the post-translational modification Phosphoserine. The For 2'-O-MTase activity role is filled by Lys-2568. Residues Gly-2593, Trp-2594, Thr-2611, Leu-2612, Asp-2638, and Val-2639 each contribute to the S-adenosyl-L-methionine site. Catalysis depends on Asp-2653, which acts as the For 2'-O-MTase activity. Ile-2654 is an S-adenosyl-L-methionine binding site. Residues Lys-2689 and Glu-2725 each act as for 2'-O-MTase activity in the active site. Position 2727 (Tyr-2727) interacts with S-adenosyl-L-methionine. A Nuclear localization signal motif is present at residues Arg-2879–Arg-2912. The Zn(2+) site is built by Glu-2946, His-2950, Cys-2955, and Cys-2958. The RdRp catalytic domain occupies Gly-3036–Ala-3188. Zn(2+) contacts are provided by His-3223, Cys-3239, and Cys-3358.

This sequence in the N-terminal section; belongs to the class I-like SAM-binding methyltransferase superfamily. mRNA cap 0-1 NS5-type methyltransferase family. As to quaternary structure, homodimer. Interacts (via N-terminus) with host EXOC1 (via C-terminus); this interaction results in EXOC1 degradation through the proteasome degradation pathway. Forms heterodimers with envelope protein E in the endoplasmic reticulum and Golgi. In terms of assembly, homodimer; in the endoplasmic reticulum and Golgi. Interacts with protein prM. Interacts with non-structural protein 1. As to quaternary structure, homodimer; Homohexamer when secreted. Interacts with envelope protein E. Interacts (via N-terminus) with serine protease NS3. In terms of assembly, forms a heterodimer with serine protease NS3. May form homooligomers. As to quaternary structure, forms a heterodimer with NS2B. Interacts with non-structural protein 2A (via N-terminus). Interacts with NS4B. Interacts with unphosphorylated RNA-directed RNA polymerase NS5; this interaction stimulates RNA-directed RNA polymerase NS5 guanylyltransferase activity. NS3 interacts with host PDCD6IP; this interaction contributes to virion release. Interacts with serine protease NS3. In terms of assembly, homodimer. Interacts with host STAT2; this interaction prevents the establishment of cellular antiviral state. Interacts with serine protease NS3. Interacts with host TRIM23; this interaction leads to NS5 ubiquitination. Post-translationally, specific enzymatic cleavages in vivo yield mature proteins. The nascent capsid protein C contains a C-terminal hydrophobic domain that act as a signal sequence for translocation of prM into the lumen of the ER. Mature capsid protein C is cleaved at a site upstream of this hydrophobic domain by NS3. prM is cleaved in post-Golgi vesicles by a host furin, releasing the mature small envelope protein M, and peptide pr. Non-structural protein 2A-alpha, a C-terminally truncated form of non-structural protein 2A, results from partial cleavage by NS3. Specific enzymatic cleavages in vivo yield mature proteins peptide 2K acts as a signal sequence and is removed from the N-terminus of NS4B by the host signal peptidase in the ER lumen. Signal cleavage at the 2K-4B site requires a prior NS3 protease-mediated cleavage at the 4A-2K site. In terms of processing, cleaved in post-Golgi vesicles by a host furin, releasing the mature small envelope protein M, and peptide pr. This cleavage is incomplete as up to 30% of viral particles still carry uncleaved prM. N-glycosylated. Post-translationally, N-glycosylated. The excreted form is glycosylated and this is required for efficient secretion of the protein from infected cells. In terms of processing, polyubiquitinated; ubiquitination is probably mediated by host TRIM23 and is prerequisite for NS5-STAT2 interaction. NS5 is not ISGylated or sumoylated. Acetylated by host KAT5. Acetylation modulates NS3 RNA-binding and unwinding activities and plays an important positive role for viral replication. Post-translationally, phosphorylated on serines residues. This phosphorylation may trigger NS5 nuclear localization.

The protein resides in the virion. It is found in the host nucleus. The protein localises to the host cytoplasm. It localises to the host perinuclear region. Its subcellular location is the secreted. The protein resides in the virion membrane. It is found in the host endoplasmic reticulum membrane. The catalysed reaction is Selective hydrolysis of -Xaa-Xaa-|-Yaa- bonds in which each of the Xaa can be either Arg or Lys and Yaa can be either Ser or Ala.. The enzyme catalyses RNA(n) + a ribonucleoside 5'-triphosphate = RNA(n+1) + diphosphate. It carries out the reaction a ribonucleoside 5'-triphosphate + H2O = a ribonucleoside 5'-diphosphate + phosphate + H(+). It catalyses the reaction ATP + H2O = ADP + phosphate + H(+). The catalysed reaction is a 5'-end (5'-triphosphoguanosine)-ribonucleoside in mRNA + S-adenosyl-L-methionine = a 5'-end (N(7)-methyl 5'-triphosphoguanosine)-ribonucleoside in mRNA + S-adenosyl-L-homocysteine. The enzyme catalyses a 5'-end (N(7)-methyl 5'-triphosphoguanosine)-ribonucleoside in mRNA + S-adenosyl-L-methionine = a 5'-end (N(7)-methyl 5'-triphosphoguanosine)-(2'-O-methyl-ribonucleoside) in mRNA + S-adenosyl-L-homocysteine + H(+). Plays a role in virus budding by binding to the cell membrane and gathering the viral RNA into a nucleocapsid that forms the core of a mature virus particle. During virus entry, may induce genome penetration into the host cytoplasm after hemifusion induced by the surface proteins. Can migrate to the cell nucleus where it modulates host functions. Functionally, inhibits RNA silencing by interfering with host Dicer. Its function is as follows. Prevents premature fusion activity of envelope proteins in trans-Golgi by binding to envelope protein E at pH6.0. After virion release in extracellular space, gets dissociated from E dimers. In terms of biological role, acts as a chaperone for envelope protein E during intracellular virion assembly by masking and inactivating envelope protein E fusion peptide. prM is the only viral peptide matured by host furin in the trans-Golgi network probably to avoid catastrophic activation of the viral fusion activity in acidic Golgi compartment prior to virion release. prM-E cleavage is inefficient, and many virions are only partially matured. These uncleaved prM would play a role in immune evasion. May play a role in virus budding. Exerts cytotoxic effects by activating a mitochondrial apoptotic pathway through M ectodomain. May display a viroporin activity. Functionally, binds to host cell surface receptor and mediates fusion between viral and cellular membranes. Envelope protein is synthesized in the endoplasmic reticulum in the form of heterodimer with protein prM. They play a role in virion budding in the ER, and the newly formed immature particle is covered with 60 spikes composed of heterodimer between precursor prM and envelope protein E. The virion is transported to the Golgi apparatus where the low pH causes dissociation of PrM-E heterodimers and formation of E homodimers. prM-E cleavage is inefficient, and many virions are only partially matured. These uncleaved prM would play a role in immune evasion. Its function is as follows. Involved in immune evasion, pathogenesis and viral replication. Once cleaved off the polyprotein, is targeted to three destinations: the viral replication cycle, the plasma membrane and the extracellular compartment. Essential for viral replication. Required for formation of the replication complex and recruitment of other non-structural proteins to the ER-derived membrane structures. Excreted as a hexameric lipoparticle that plays a role against host immune response. Antagonizing the complement function. Binds to the host macrophages and dendritic cells. Inhibits signal transduction originating from Toll-like receptor 3 (TLR3). In terms of biological role, component of the viral RNA replication complex that functions in virion assembly and antagonizes the host immune response. Required cofactor for the serine protease function of NS3. May have membrane-destabilizing activity and form viroporins. Functionally, displays three enzymatic activities: serine protease, NTPase and RNA helicase. NS3 serine protease, in association with NS2B, performs its autocleavage and cleaves the polyprotein at dibasic sites in the cytoplasm: C-prM, NS2A-NS2B, NS2B-NS3, NS3-NS4A, NS4A-2K and NS4B-NS5. NS3 RNA helicase binds RNA and unwinds dsRNA in the 3' to 5' direction. Also plays a role in virus assembly. Its function is as follows. Regulates the ATPase activity of the NS3 helicase activity. NS4A allows NS3 helicase to conserve energy during unwinding. In terms of biological role, functions as a signal peptide for NS4B and is required for the interferon antagonism activity of the latter. Induces the formation of ER-derived membrane vesicles where the viral replication takes place. Inhibits interferon (IFN)-induced host STAT1 phosphorylation and nuclear translocation, thereby preventing the establishment of cellular antiviral state by blocking the IFN-alpha/beta pathway. Functionally, replicates the viral (+) and (-) RNA genome, and performs the capping of genomes in the cytoplasm. NS5 methylates viral RNA cap at guanine N-7 and ribose 2'-O positions. Besides its role in RNA genome replication, also prevents the establishment of cellular antiviral state by blocking the interferon-alpha/beta (IFN-alpha/beta) signaling pathway. IFN-I induces binding of NS5 to host IFN-activated transcription factor STAT2, preventing its transcriptional activity. Host TRIM23 is the E3 ligase that interacts with and polyubiquitinates NS5 to promote its binding to STAT2 and trigger IFN-I signaling inhibition. The chain is Genome polyprotein from Aedes aegypti (Yellowfever mosquito).